The following is a 191-amino-acid chain: Penicillin-binding protein activator LpoB (191 aa).

The signal sequence occupies residues M1 to S16. A lipid anchor (N-palmitoyl cysteine) is attached at C17. A lipid anchor (S-diacylglycerol cysteine) is attached at C17. The segment at Q25 to K48 is disordered.

Belongs to the LpoB family. In terms of assembly, interacts with PBP1b.

Its subcellular location is the cell outer membrane. Regulator of peptidoglycan synthesis that is essential for the function of penicillin-binding protein 1B (PBP1b). This is Penicillin-binding protein activator LpoB from Xenorhabdus nematophila (strain ATCC 19061 / DSM 3370 / CCUG 14189 / LMG 1036 / NCIMB 9965 / AN6).